Reading from the N-terminus, the 474-residue chain is Citrate synthase 4, mitochondrial (474 aa).

Residues 1 to 16 (MVFFRSVSAFTRLRSR) constitute a mitochondrion transit peptide. Active-site residues include histidine 308, histidine 354, and aspartate 409.

This sequence belongs to the citrate synthase family. In terms of assembly, homodimer.

It is found in the mitochondrion matrix. The enzyme catalyses oxaloacetate + acetyl-CoA + H2O = citrate + CoA + H(+). It functions in the pathway carbohydrate metabolism; tricarboxylic acid cycle; isocitrate from oxaloacetate: step 1/2. In Arabidopsis thaliana (Mouse-ear cress), this protein is Citrate synthase 4, mitochondrial (CSY4).